The following is a 477-amino-acid chain: PTS system MurNAc-GlcNAc-specific EIIBC component (477 aa).

The region spanning 5-87 is the PTS EIIB type-1 domain; it reads QQLAHHILDA…VKLSGVQLGE (83 aa). Catalysis depends on C27, which acts as the Phosphocysteine intermediate; for EIIB activity. The segment at 91-113 is disordered; that stretch reads HRSNTSNIKNQAQQNKREFQQKR. Over residues 92 to 104 the composition is skewed to polar residues; that stretch reads RSNTSNIKNQAQQ. Residues 123–477 enclose the PTS EIIC type-1 domain; that stretch reads KSIANIFIPL…EMRNLNKLGD (355 aa). 10 consecutive transmembrane segments (helical) span residues 128–148, 167–187, 192–212, 227–247, 267–287, 298–318, 342–362, 377–397, 401–421, and 443–463; these read IFIP…IAAV, VAVL…FTGF, VFGA…LTGI, LIAG…LSII, ISLL…AGFI, VIGV…LPLV, LLPI…ALWV, ALPV…TLPL, FITA…IGHI, and LGYI…TYFF.

The protein resides in the cell membrane. The enzyme catalyses N-acetyl-beta-D-muramate-(1-&gt;4)-N-acetyl-D-glucosamine(out) + N(pros)-phospho-L-histidyl-[protein] = 6-phospho-N-acetyl-beta-D-muramate-(1-&gt;4)-N-acetyl-D-glucosamine(in) + L-histidyl-[protein]. The protein operates within cell wall biogenesis; peptidoglycan recycling. In terms of biological role, the phosphoenolpyruvate-dependent sugar phosphotransferase system (sugar PTS), a major carbohydrate active transport system, catalyzes the phosphorylation of incoming sugar substrates concomitantly with their translocation across the cell membrane. This system is involved in the uptake and phosphorylation of MurNAc-GlcNAc, the principle peptidoglycan turnover product of S.aureus, yielding cytoplasmic MurNAc 6P-GlcNAc. In Staphylococcus haemolyticus (strain JCSC1435), this protein is PTS system MurNAc-GlcNAc-specific EIIBC component.